We begin with the raw amino-acid sequence, 338 residues long: dTDP-glucose 4,6-dehydratase (338 aa).

Residues 12 to 13 (FI), 33 to 36 (DKLT), 59 to 60 (DI), 81 to 85 (LAAES), and threonine 100 contribute to the NAD(+) site. Serine 85 is a binding site for substrate. Residue threonine 134 participates in substrate binding. The Proton donor role is filled by aspartate 135. Active-site proton acceptor residues include glutamate 136 and tyrosine 160. An NAD(+)-binding site is contributed by 160-164 (YSASK). Asparagine 189 is a binding site for substrate. Asparagine 190 is a binding site for NAD(+). Substrate is bound by residues 199-200 (KL), 215-217 (PIY), arginine 224, asparagine 259, and 293-297 (DRPGH).

The protein belongs to the NAD(P)-dependent epimerase/dehydratase family. dTDP-glucose dehydratase subfamily. Homodimer. NAD(+) serves as cofactor.

It catalyses the reaction dTDP-alpha-D-glucose = dTDP-4-dehydro-6-deoxy-alpha-D-glucose + H2O. It participates in carbohydrate biosynthesis; dTDP-L-rhamnose biosynthesis. It functions in the pathway bacterial outer membrane biogenesis; LPS O-antigen biosynthesis. Functionally, catalyzes the dehydration of dTDP-D-glucose to form dTDP-6-deoxy-D-xylo-4-hexulose via a three-step process involving oxidation, dehydration and reduction. The chain is dTDP-glucose 4,6-dehydratase (rffG) from Haemophilus influenzae (strain ATCC 51907 / DSM 11121 / KW20 / Rd).